Reading from the N-terminus, the 403-residue chain is Large ribosomal subunit protein uL3 (403 aa).

The tract at residues 1 to 38 (MSHRKFSAPRHGSLGFLPRKRSSRHRGKVKSFPKDDSS) is disordered. Ser-13 is modified (phosphoserine). The segment covering 18–31 (PRKRSSRHRGKVKS) has biased composition (basic residues). A Glycyl lysine isopeptide (Lys-Gly) (interchain with G-Cter in SUMO2) cross-link involves residue Lys-39. Lys-136 is modified (N6-acetyllysine). Residues Lys-224 and Lys-226 each participate in a glycyl lysine isopeptide (Lys-Gly) (interchain with G-Cter in SUMO2) cross-link. Tele-methylhistidine is present on His-245. An N6-acetyllysine; alternate mark is found at Lys-286 and Lys-294. Residue Lys-286 forms a Glycyl lysine isopeptide (Lys-Gly) (interchain with G-Cter in SUMO2); alternate linkage. Lys-294 participates in a covalent cross-link: Glycyl lysine isopeptide (Lys-Gly) (interchain with G-Cter in SUMO1); alternate. Residue Ser-304 is modified to Phosphoserine. Lys-366 carries the N6-acetyllysine; alternate modification. Residue Lys-366 forms a Glycyl lysine isopeptide (Lys-Gly) (interchain with G-Cter in SUMO2); alternate linkage. An N6-acetyllysine modification is found at Lys-373. Residues Lys-386, Lys-393, and Lys-399 each participate in a glycyl lysine isopeptide (Lys-Gly) (interchain with G-Cter in SUMO2) cross-link.

This sequence belongs to the universal ribosomal protein uL3 family. Component of the large ribosomal subunit. Interacts with DHX33. Constitutively monomethylated at His-245 by METTL18. Methylation at His-245 regulates translation elongation by slowing ribosome traversal on tyrosine codons: slower elongation provides enough time for proper folding of synthesized proteins and prevents cellular aggregation of tyrosine-rich proteins It is not required for incorporation of RPL3 into ribosomes.

It localises to the nucleus. Its subcellular location is the nucleolus. The protein localises to the cytoplasm. Its function is as follows. Component of the large ribosomal subunit. The ribosome is a large ribonucleoprotein complex responsible for the synthesis of proteins in the cell. The chain is Large ribosomal subunit protein uL3 (RPL3) from Sus scrofa (Pig).